Consider the following 132-residue polypeptide: Small ribosomal subunit protein uS11 (132 aa).

The protein belongs to the universal ribosomal protein uS11 family. As to quaternary structure, part of the 30S ribosomal subunit. Interacts with proteins S7 and S18. Binds to IF-3.

Located on the platform of the 30S subunit, it bridges several disparate RNA helices of the 16S rRNA. Forms part of the Shine-Dalgarno cleft in the 70S ribosome. The sequence is that of Small ribosomal subunit protein uS11 from Chlamydia trachomatis serovar A (strain ATCC VR-571B / DSM 19440 / HAR-13).